Consider the following 291-residue polypeptide: tRNA dimethylallyltransferase (291 aa).

Position 17 to 24 (17 to 24 (GPTASGKS)) interacts with ATP. Substrate is bound at residue 19–24 (TASGKS).

Belongs to the IPP transferase family. In terms of assembly, monomer. Mg(2+) is required as a cofactor.

The enzyme catalyses adenosine(37) in tRNA + dimethylallyl diphosphate = N(6)-dimethylallyladenosine(37) in tRNA + diphosphate. In terms of biological role, catalyzes the transfer of a dimethylallyl group onto the adenine at position 37 in tRNAs that read codons beginning with uridine, leading to the formation of N6-(dimethylallyl)adenosine (i(6)A). The chain is tRNA dimethylallyltransferase from Cereibacter sphaeroides (strain ATCC 17025 / ATH 2.4.3) (Rhodobacter sphaeroides).